The chain runs to 531 residues: Beta-hexosaminidase subunit beta (531 aa).

A signal peptide spans 1–21; sequence MEVLPGLLRLLAALVVAERWA. Cysteine 67 and cysteine 111 form a disulfide bridge. Asparagine 120, asparagine 164, and asparagine 301 each carry an N-linked (GlcNAc...) asparagine glycan. Intrachain disulfides connect cysteine 283-cysteine 334 and cysteine 508-cysteine 525. The active-site Proton donor is the glutamate 329.

Belongs to the glycosyl hydrolase 20 family. There are 3 forms of beta-hexosaminidase: hexosaminidase A is a heterodimer composed of one subunit alpha and one subunit beta (chain A and B); hexosaminidase B is a homodimer of two beta subunits (two chains A and B); hexosaminidase S is a homodimer of two alpha subunits. The composition of the dimer (isozyme A versus isozyme S) has a significant effect on the substrate specificity of the alpha subunit active site.

Its subcellular location is the lysosome. The protein localises to the cytoplasmic vesicle. It is found in the secretory vesicle. It localises to the cortical granule. It carries out the reaction Hydrolysis of terminal non-reducing N-acetyl-D-hexosamine residues in N-acetyl-beta-D-hexosaminides.. It catalyses the reaction N-acetyl-beta-D-galactosaminyl-(1-&gt;4)-beta-D-3-sulfogalactosyl-(1-&gt;4)-beta-D-glucosyl-(1&lt;-&gt;1')-ceramide + H2O = a beta-D-3-sulfogalactosyl-(1-&gt;4)-beta-D-glucosyl-(1&lt;-&gt;1')-ceramide + N-acetyl-beta-D-galactosamine. The catalysed reaction is a ganglioside GM2 (d18:1(4E)) + H2O = a ganglioside GM3 (d18:1(4E)) + N-acetyl-beta-D-galactosamine. The enzyme catalyses a ganglioside GM2 + H2O = a ganglioside GM3 + N-acetyl-beta-D-galactosamine. It carries out the reaction beta-D-GalNAc-(1-&gt;4)-alpha-L-IdoA-(1-&gt;3)-beta-D-GalNAc-4-sulfate-(1-&gt;4)-alpha-L-IdoA-(1-&gt;3)-D-GalNAc-4-sulfate + H2O = alpha-L-IdoA-(1-&gt;3)-beta-D-GalNAc-4-sulfate-(1-&gt;4)-alpha-L-IdoA-(1-&gt;3)-D-GalNAc-4-sulfate + N-acetyl-D-galactosamine. It catalyses the reaction N-acetyl-beta-D-6-sulfogalactosaminyl-(1-&gt;4)-alpha-L-iduronyl-(1-&gt;3)-N-acetyl-D-6-sulfogalactosamine + H2O = alpha-L-iduronyl-(1-&gt;3)-N-acetyl-D-6-sulfogalactosamine + N-acetyl-D-6-sulfogalactosamine. With respect to regulation, addition of GM2A stimulates the hydrolysis of sulfated glycosphingolipid SM2 and the ganglioside GM2. Hydrolyzes the non-reducing end N-acetyl-D-hexosamine and/or sulfated N-acetyl-D-hexosamine of glycoconjugates, such as the oligosaccharide moieties from proteins and neutral glycolipids, or from certain mucopolysaccharides. The isozyme B does not hydrolyze each of these substrates, however hydrolyzes efficiently neutral oligosaccharide. Only the isozyme A is responsible for the degradation of GM2 gangliosides in the presence of GM2A. During fertilization is responsible, at least in part, for the zona block to polyspermy. Present in the cortical granules of non-activated oocytes, is exocytosed during the cortical reaction in response to oocyte activation and inactivates the sperm galactosyltransferase-binding site, accounting for the block in sperm binding to the zona pellucida. This chain is Beta-hexosaminidase subunit beta, found in Sus scrofa (Pig).